We begin with the raw amino-acid sequence, 354 residues long: Clavesin-1 (354 aa).

In terms of domain architecture, CRAL-TRIO spans 118–279 (IKRALIDGFP…EFGGTLPPYD (162 aa)). Residues 317–354 (RECSPKPMKRSQSVVEAGTLKHEEKGENENTQPLLALD) form a disordered region. The span at 335 to 344 (TLKHEEKGEN) shows a compositional bias: basic and acidic residues. Residues 345–354 (ENTQPLLALD) are compositionally biased toward polar residues.

In terms of assembly, forms a complex with clathrin heavy chain and gamma-adaptin.

It is found in the golgi apparatus. The protein localises to the trans-Golgi network membrane. It localises to the early endosome membrane. Its subcellular location is the cytoplasmic vesicle. The protein resides in the clathrin-coated vesicle. In terms of biological role, required for normal morphology of late endosomes and/or lysosomes in neurons. Binds phosphatidylinositol 3,5-bisphosphate (PtdIns(3,5)P2). In Mus musculus (Mouse), this protein is Clavesin-1 (Clvs1).